Consider the following 461-residue polypeptide: Ornithine decarboxylase (461 aa).

N6-(pyridoxal phosphate)lysine is present on K69. Residues S200, G237, and 274–277 (EPGR) each bind pyridoxal 5'-phosphate. Residue S303 is modified to Phosphoserine; by CK2. 331 to 332 (YD) contributes to the substrate binding site. Residue C360 is the Proton donor; shared with dimeric partner of the active site. C360 carries the post-translational modification S-nitrosocysteine; in inhibited form. D361 contributes to the substrate binding site. Y389 is a binding site for pyridoxal 5'-phosphate.

This sequence belongs to the Orn/Lys/Arg decarboxylase class-II family. Homodimer. Only the dimer is catalytically active, as the active sites are constructed of residues from both monomers. Does not form a heterodimer with AZIN2. The cofactor is pyridoxal 5'-phosphate. S-Nitrosylation inhibits the enzyme. S-Nitrosylated in vitro on 4 cysteine residues.

It catalyses the reaction L-ornithine + H(+) = putrescine + CO2. It participates in amine and polyamine biosynthesis; putrescine biosynthesis via L-ornithine pathway; putrescine from L-ornithine: step 1/1. Inhibited by S-nitrosylation. Inhibited by antizymes (AZs) OAZ1, OAZ2 and OAZ3 in response to polyamine levels. AZs inhibit the assembly of the functional homodimer by binding to ODC monomers. Additionally, OAZ1 targets ODC monomers for ubiquitin-independent proteolytic destruction by the 26S proteasome. Inhibited by 1-amino-oxy-3-aminopropane (APA, an isosteric analog of putrescine). Irreversibly inhibited by alpha-difluoromethylornithine (DFMO). Its function is as follows. Catalyzes the first and rate-limiting step of polyamine biosynthesis that converts ornithine into putrescine, which is the precursor for the polyamines, spermidine and spermine. Polyamines are essential for cell proliferation and are implicated in cellular processes, ranging from DNA replication to apoptosis. This is Ornithine decarboxylase (ODC1) from Homo sapiens (Human).